The following is a 112-amino-acid chain: Protein Churchill (112 aa).

Zn(2+) contacts are provided by C2, C5, C30, C33, H59, C61, C64, H66, H71, C88, and C91.

It belongs to the Churchill family.

Functionally, transcriptional activator that mediates FGF signaling during neural development. Plays a role in the regulation of cell movement. Does not bind DNA by itself. The protein is Protein Churchill (churc1) of Xenopus laevis (African clawed frog).